The chain runs to 103 residues: Phosphoribosyl-ATP pyrophosphatase (103 aa).

Positions Leu84–Leu103 are disordered.

It belongs to the PRA-PH family.

The protein localises to the cytoplasm. It carries out the reaction 1-(5-phospho-beta-D-ribosyl)-ATP + H2O = 1-(5-phospho-beta-D-ribosyl)-5'-AMP + diphosphate + H(+). Its pathway is amino-acid biosynthesis; L-histidine biosynthesis; L-histidine from 5-phospho-alpha-D-ribose 1-diphosphate: step 2/9. This is Phosphoribosyl-ATP pyrophosphatase (hisE) from Listeria innocua serovar 6a (strain ATCC BAA-680 / CLIP 11262).